Reading from the N-terminus, the 240-residue chain is Methylthioribulose-1-phosphate dehydratase (240 aa).

Cys99 contributes to the substrate binding site. Residues His116 and His118 each coordinate Zn(2+). Residue Glu145 is the Proton donor/acceptor of the active site. His201 provides a ligand contact to Zn(2+).

The protein belongs to the aldolase class II family. MtnB subfamily. The cofactor is Zn(2+).

Its subcellular location is the cytoplasm. It carries out the reaction 5-(methylsulfanyl)-D-ribulose 1-phosphate = 5-methylsulfanyl-2,3-dioxopentyl phosphate + H2O. The protein operates within amino-acid biosynthesis; L-methionine biosynthesis via salvage pathway; L-methionine from S-methyl-5-thio-alpha-D-ribose 1-phosphate: step 2/6. In terms of biological role, catalyzes the dehydration of methylthioribulose-1-phosphate (MTRu-1-P) into 2,3-diketo-5-methylthiopentyl-1-phosphate (DK-MTP-1-P). The polypeptide is Methylthioribulose-1-phosphate dehydratase (Paracoccidioides lutzii (strain ATCC MYA-826 / Pb01) (Paracoccidioides brasiliensis)).